Reading from the N-terminus, the 539-residue chain is uncharacterized protein (539 aa).

6-20 (LIIGGGGAAARAAIE) contributes to the FAD binding site. Active-site residues include His227 and Arg243.

Belongs to the FAD-dependent oxidoreductase 2 family. FRD/SDH subfamily. The cofactor is FAD.

This is an uncharacterized protein from Methanocaldococcus jannaschii (strain ATCC 43067 / DSM 2661 / JAL-1 / JCM 10045 / NBRC 100440) (Methanococcus jannaschii).